The primary structure comprises 159 residues: Small ribosomal subunit protein uS7c (159 aa).

This sequence belongs to the universal ribosomal protein uS7 family. Part of the 30S ribosomal subunit.

It is found in the plastid. The protein localises to the chloroplast. One of the primary rRNA binding proteins, it binds directly to 16S rRNA where it nucleates assembly of the head domain of the 30S subunit. This is Small ribosomal subunit protein uS7c (rps7) from Bigelowiella natans (Pedinomonas minutissima).